The sequence spans 521 residues: Bifunctional purine biosynthesis protein PurH (521 aa).

Positions Met-1 to Val-145 constitute an MGS-like domain.

It belongs to the PurH family.

The enzyme catalyses (6R)-10-formyltetrahydrofolate + 5-amino-1-(5-phospho-beta-D-ribosyl)imidazole-4-carboxamide = 5-formamido-1-(5-phospho-D-ribosyl)imidazole-4-carboxamide + (6S)-5,6,7,8-tetrahydrofolate. The catalysed reaction is IMP + H2O = 5-formamido-1-(5-phospho-D-ribosyl)imidazole-4-carboxamide. It functions in the pathway purine metabolism; IMP biosynthesis via de novo pathway; 5-formamido-1-(5-phospho-D-ribosyl)imidazole-4-carboxamide from 5-amino-1-(5-phospho-D-ribosyl)imidazole-4-carboxamide (10-formyl THF route): step 1/1. The protein operates within purine metabolism; IMP biosynthesis via de novo pathway; IMP from 5-formamido-1-(5-phospho-D-ribosyl)imidazole-4-carboxamide: step 1/1. The sequence is that of Bifunctional purine biosynthesis protein PurH from Paraburkholderia phytofirmans (strain DSM 17436 / LMG 22146 / PsJN) (Burkholderia phytofirmans).